The following is an 89-amino-acid chain: Small ribosomal subunit protein uS15 (89 aa).

The span at 1 to 21 shows a compositional bias: basic and acidic residues; it reads MSVDAETKTKIIKDNARDKND. A disordered region spans residues 1 to 26; it reads MSVDAETKTKIIKDNARDKNDTGSPE.

This sequence belongs to the universal ribosomal protein uS15 family. In terms of assembly, part of the 30S ribosomal subunit. Forms a bridge to the 50S subunit in the 70S ribosome, contacting the 23S rRNA.

One of the primary rRNA binding proteins, it binds directly to 16S rRNA where it helps nucleate assembly of the platform of the 30S subunit by binding and bridging several RNA helices of the 16S rRNA. In terms of biological role, forms an intersubunit bridge (bridge B4) with the 23S rRNA of the 50S subunit in the ribosome. The sequence is that of Small ribosomal subunit protein uS15 from Erythrobacter litoralis (strain HTCC2594).